Here is a 482-residue protein sequence, read N- to C-terminus: tRNA sulfurtransferase (482 aa).

In terms of domain architecture, THUMP spans 61 to 165; the sequence is LAIRDALTRI…DDRLLLIKGR (105 aa). Residues 183 to 184, Lys-265, Gly-287, and Gln-296 each bind ATP; that span reads LI. An intrachain disulfide couples Cys-344 to Cys-456. Positions 404 to 482 constitute a Rhodanese domain; it reads FGPNDVILDI…GFNNVKVYRP (79 aa). Residue Cys-456 is the Cysteine persulfide intermediate of the active site.

This sequence belongs to the ThiI family.

Its subcellular location is the cytoplasm. The catalysed reaction is [ThiI sulfur-carrier protein]-S-sulfanyl-L-cysteine + a uridine in tRNA + 2 reduced [2Fe-2S]-[ferredoxin] + ATP + H(+) = [ThiI sulfur-carrier protein]-L-cysteine + a 4-thiouridine in tRNA + 2 oxidized [2Fe-2S]-[ferredoxin] + AMP + diphosphate. The enzyme catalyses [ThiS sulfur-carrier protein]-C-terminal Gly-Gly-AMP + S-sulfanyl-L-cysteinyl-[cysteine desulfurase] + AH2 = [ThiS sulfur-carrier protein]-C-terminal-Gly-aminoethanethioate + L-cysteinyl-[cysteine desulfurase] + A + AMP + 2 H(+). Its pathway is cofactor biosynthesis; thiamine diphosphate biosynthesis. In terms of biological role, catalyzes the ATP-dependent transfer of a sulfur to tRNA to produce 4-thiouridine in position 8 of tRNAs, which functions as a near-UV photosensor. Also catalyzes the transfer of sulfur to the sulfur carrier protein ThiS, forming ThiS-thiocarboxylate. This is a step in the synthesis of thiazole, in the thiamine biosynthesis pathway. The sulfur is donated as persulfide by IscS. This is tRNA sulfurtransferase from Escherichia fergusonii (strain ATCC 35469 / DSM 13698 / CCUG 18766 / IAM 14443 / JCM 21226 / LMG 7866 / NBRC 102419 / NCTC 12128 / CDC 0568-73).